A 543-amino-acid chain; its full sequence is Tyrosine-protein kinase Yes (543 aa).

The segment covering M1 to N20 has biased composition (basic and acidic residues). The disordered stretch occupies residues M1 to S45. G2 is lipidated: N-myristoyl glycine. A lipid anchor (S-palmitoyl cysteine; in membrane form) is attached at C3. Phosphothreonine is present on T21. Y32 is subject to Phosphotyrosine. A Phosphoserine modification is found at S40. In terms of domain architecture, SH3 spans G91–S152. Residues W158–C255 enclose the SH2 domain. A Protein kinase domain is found at L277 to F530. Residues L283–V291 and K305 contribute to the ATP site. Residues Y336 and Y345 each carry the phosphotyrosine modification. D396 acts as the Proton acceptor in catalysis. Y426 carries the phosphotyrosine; by autocatalysis modification. Residue Y446 is modified to Phosphotyrosine. Y537 bears the Phosphotyrosine; by CSK mark.

Belongs to the protein kinase superfamily. Tyr protein kinase family. SRC subfamily. In terms of assembly, interacts with YAP1 and CSF1R. Interacts with CTNND1; this interaction allows YES1-mediated activation of FYN and FER and subsequent phosphorylation of CTNND1. Interacts with FASLG. Interacts with IL6ST/gp130. Interacts with SCRIB, when YES1 is in a closed conformation; the interaction facilitates YES1 autophosphorylation. Post-translationally, phosphorylated. Phosphorylation by CSK on the C-terminal tail maintains the enzyme in an inactive state. Autophosphorylation at Tyr-426 maintains enzyme activity by blocking CSK-mediated inhibition. Palmitoylation at Cys-3 promotes membrane localization. In terms of tissue distribution, expressed in the epithelial cells of renal proximal tubules and stomach as well as hematopoietic cells in the bone marrow and spleen in the fetal tissues. In adult, expressed in epithelial cells of the renal proximal tubules and present in keratinocytes in the basal epidermal layer of epidermis.

Its subcellular location is the cell membrane. The protein resides in the cytoplasm. It localises to the cytoskeleton. It is found in the microtubule organizing center. The protein localises to the centrosome. Its subcellular location is the cytosol. The protein resides in the cell junction. The enzyme catalyses L-tyrosyl-[protein] + ATP = O-phospho-L-tyrosyl-[protein] + ADP + H(+). Functionally, non-receptor protein tyrosine kinase that is involved in the regulation of cell growth and survival, apoptosis, cell-cell adhesion, cytoskeleton remodeling, and differentiation. Stimulation by receptor tyrosine kinases (RTKs) including EGFR, PDGFR, CSF1R and FGFR leads to recruitment of YES1 to the phosphorylated receptor, and activation and phosphorylation of downstream substrates. Upon EGFR activation, promotes the phosphorylation of PARD3 to favor epithelial tight junction assembly. Participates in the phosphorylation of specific junctional components such as CTNND1 by stimulating the FYN and FER tyrosine kinases at cell-cell contacts. Upon T-cell stimulation by CXCL12, phosphorylates collapsin response mediator protein 2/DPYSL2 and induces T-cell migration. Participates in CD95L/FASLG signaling pathway and mediates AKT-mediated cell migration. Plays a role in cell cycle progression by phosphorylating the cyclin-dependent kinase 4/CDK4 thus regulating the G1 phase. Also involved in G2/M progression and cytokinesis. Catalyzes phosphorylation of organic cation transporter OCT2 which induces its transport activity. This Homo sapiens (Human) protein is Tyrosine-protein kinase Yes (YES1).